Reading from the N-terminus, the 99-residue chain is Large ribosomal subunit protein bL28 (99 aa).

The protein belongs to the bacterial ribosomal protein bL28 family.

The sequence is that of Large ribosomal subunit protein bL28 from Rhizobium etli (strain CIAT 652).